We begin with the raw amino-acid sequence, 53 residues long: UPF0391 membrane protein BP1737 (53 aa).

A run of 2 helical transmembrane segments spans residues 5–25 (AVVFFVIAIIAAVLGFGGIAA) and 30–50 (IAKILFFVFLVLALLSILGGV).

The protein belongs to the UPF0391 family.

The protein resides in the cell membrane. The sequence is that of UPF0391 membrane protein BP1737 from Bordetella pertussis (strain Tohama I / ATCC BAA-589 / NCTC 13251).